Consider the following 702-residue polypeptide: Protein-glucosylgalactosylhydroxylysine glucosidase (702 aa).

A substrate-binding site is contributed by 310–311; sequence WD. Residue Glu-440 is the Proton donor of the active site. 508-509 is a binding site for substrate; that stretch reads KQ.

Belongs to the glycosyl hydrolase 65 family.

The catalysed reaction is (5R)-5-O-[alpha-D-glucosyl-(1-&gt;2)-beta-D-galactosyl]-5-hydroxy-L-lysyl-[collagen] + H2O = (5R)-5-O-(beta-D-galactosyl)-5-hydroxy-L-lysyl-[collagen] + D-glucose. In terms of biological role, catalyzes the hydrolysis of glucose from the disaccharide unit linked to hydroxylysine residues of collagen and collagen-like proteins. This is Protein-glucosylgalactosylhydroxylysine glucosidase from Gallus gallus (Chicken).